A 324-amino-acid chain; its full sequence is Aldo-keto reductase family 1 member A1 (324 aa).

A Phosphoserine modification is found at Ser3. NADP(+) is bound by residues Gly10–Gly19, Thr20, and Trp21. Ser37 bears the Phosphoserine mark. Asp44 contacts NADP(+). Tyr49 (proton donor) is an active-site residue. An N6-acetyllysine; alternate modification is found at Lys126. N6-succinyllysine; alternate is present on Lys126. At Lys144 the chain carries N6-succinyllysine. 13 residues coordinate NADP(+): Ser161, Asn162, Ser210, Leu212, Ser214, Ser215, Lys262, Ser263, Ile264, Thr265, Arg268, Gln271, and Asn272. Ser210 bears the Phosphoserine mark.

It belongs to the aldo/keto reductase family.

The protein localises to the cytoplasm. Its subcellular location is the cytosol. It is found in the apical cell membrane. The enzyme catalyses a primary alcohol + NADP(+) = an aldehyde + NADPH + H(+). The catalysed reaction is L-gulonate + NADP(+) = aldehydo-D-glucuronate + NADPH + H(+). It carries out the reaction L-gulono-1,4-lactone + NADP(+) = D-glucurono-3,6-lactone + NADPH + H(+). It catalyses the reaction allyl alcohol + NADP(+) = acrolein + NADPH + H(+). The enzyme catalyses glycerol + NADP(+) = D-glyceraldehyde + NADPH + H(+). The catalysed reaction is glycerol + NADP(+) = L-glyceraldehyde + NADPH + H(+). It carries out the reaction hydroxyacetone + NADP(+) = methylglyoxal + NADPH + H(+). It catalyses the reaction 3-deoxyfructose + NADP(+) = 3-deoxyglucosone + NADPH + H(+). The enzyme catalyses (R)-mevalonate + NADP(+) = (R)-mevaldate + NADPH + H(+). The catalysed reaction is S-nitroso-CoA + NADPH + H(+) = sulfinamide-CoA + NADP(+). It carries out the reaction S-nitrosoglutathione + NADPH + H(+) = S-(hydroxysulfenamide)glutathione + NADP(+). Functionally, catalyzes the NADPH-dependent reduction of a wide variety of carbonyl-containing compounds to their corresponding alcohols. Displays enzymatic activity towards endogenous metabolites such as aromatic and aliphatic aldehydes, ketones, monosaccharides and bile acids, with a preference for negatively charged substrates, such as glucuronate and succinic semialdehyde. Plays an important role by catalyzing the reduction of D-glucuronic acid and D-glucurono-gamma-lactone. Functions as a detoxifiying enzyme by reducing a range of toxic aldehydes. Reduces methylglyoxal and 3-deoxyglucosone, which are present at elevated levels under hyperglycemic conditions and are cytotoxic. Involved also in the detoxification of lipid-derived aldehydes like acrolein. Plays a role in the activation of procarcinogens, such as polycyclic aromatic hydrocarbon trans-dihydrodiols, and in the metabolism of various xenobiotics and drugs. Also acts as an inhibitor of protein S-nitrosylation by mediating degradation of S-nitroso-coenzyme A (S-nitroso-CoA), a cofactor required to S-nitrosylate proteins. S-nitroso-CoA reductase activity is involved in reprogramming intermediary metabolism in renal proximal tubules, notably by inhibiting protein S-nitrosylation of isoform 2 of PKM (PKM2). Also acts as a S-nitroso-glutathione reductase by catalyzing the NADPH-dependent reduction of S-nitrosoglutathione. Displays no reductase activity towards retinoids. The sequence is that of Aldo-keto reductase family 1 member A1 (AKR1A1) from Cricetulus griseus (Chinese hamster).